The chain runs to 2904 residues: Protein eyes shut homolog (2904 aa).

A signal peptide spans 1-23; it reads MRNPKLAIIVFLLSCVIYGPVYS. N-linked (GlcNAc...) asparagine glycans are attached at residues asparagine 41 and asparagine 135. EGF-like domains lie at 174-216, 217-259, 263-298, and 300-336; these read KPQL…RYCE, NVDG…VNCS, GNQN…TYCE, and KRLF…LNCE. Intrachain disulfides connect cysteine 178-cysteine 193, cysteine 187-cysteine 204, cysteine 206-cysteine 215, cysteine 221-cysteine 232, cysteine 226-cysteine 247, and cysteine 249-cysteine 258. 2 N-linked (GlcNAc...) asparagine glycosylation sites follow: asparagine 257 and asparagine 266. Disulfide bonds link cysteine 267–cysteine 276, cysteine 271–cysteine 286, cysteine 288–cysteine 297, cysteine 304–cysteine 315, cysteine 309–cysteine 324, and cysteine 326–cysteine 335. A glycan (N-linked (GlcNAc...) asparagine) is linked at asparagine 362. 3 EGF-like domains span residues 375–411, 413–451, and 453–496; these read QAEV…KNCE, IIDF…EFCQ, and LENA…PYCE. 12 disulfides stabilise this stretch: cysteine 379–cysteine 390, cysteine 384–cysteine 399, cysteine 401–cysteine 410, cysteine 417–cysteine 430, cysteine 424–cysteine 439, cysteine 441–cysteine 450, cysteine 457–cysteine 470, cysteine 464–cysteine 484, cysteine 486–cysteine 495, cysteine 502–cysteine 513, cysteine 507–cysteine 522, and cysteine 524–cysteine 533. Residues 498-534 enclose the EGF-like 8; calcium-binding domain; sequence EVNECDSSPCQHQGTCTDFVGYYKCTCPSGYTGIDCE. Asparagine 544 is a glycosylation site (N-linked (GlcNAc...) asparagine). In terms of domain architecture, EGF-like 9 spans 565–603; sequence HTPCPHYLQPCANGGHCVLHNITSYSCVCAPGWTGATCL. 78 disulfides stabilise this stretch: cysteine 568-cysteine 581, cysteine 575-cysteine 591, cysteine 593-cysteine 602, cysteine 609-cysteine 620, cysteine 614-cysteine 629, cysteine 631-cysteine 640, cysteine 645-cysteine 656, cysteine 650-cysteine 665, cysteine 667-cysteine 676, cysteine 683-cysteine 694, cysteine 688-cysteine 703, cysteine 705-cysteine 714, cysteine 721-cysteine 732, cysteine 726-cysteine 741, cysteine 743-cysteine 752, cysteine 759-cysteine 772, cysteine 764-cysteine 781, cysteine 783-cysteine 792, cysteine 799-cysteine 810, cysteine 804-cysteine 819, cysteine 821-cysteine 830, cysteine 837-cysteine 848, cysteine 842-cysteine 857, cysteine 859-cysteine 868, cysteine 875-cysteine 886, cysteine 880-cysteine 895, cysteine 897-cysteine 906, cysteine 913-cysteine 924, cysteine 918-cysteine 933, cysteine 935-cysteine 944, cysteine 951-cysteine 962, cysteine 956-cysteine 971, cysteine 973-cysteine 982, cysteine 987-cysteine 999, cysteine 993-cysteine 1014, cysteine 1016-cysteine 1025, cysteine 1032-cysteine 1042, cysteine 1037-cysteine 1051, cysteine 1053-cysteine 1062, cysteine 1069-cysteine 1080, cysteine 1074-cysteine 1089, cysteine 1091-cysteine 1100, cysteine 1107-cysteine 1118, cysteine 1112-cysteine 1127, cysteine 1129-cysteine 1138, cysteine 1145-cysteine 1156, cysteine 1150-cysteine 1167, cysteine 1169-cysteine 1178, cysteine 1185-cysteine 1198, cysteine 1192-cysteine 1208, cysteine 1210-cysteine 1219, cysteine 1226-cysteine 1237, cysteine 1231-cysteine 1246, cysteine 1248-cysteine 1257, cysteine 1264-cysteine 1275, cysteine 1269-cysteine 1284, cysteine 1286-cysteine 1295, cysteine 1302-cysteine 1313, cysteine 1307-cysteine 1322, cysteine 1324-cysteine 1333, cysteine 1340-cysteine 1351, cysteine 1345-cysteine 1360, cysteine 1362-cysteine 1371, cysteine 1378-cysteine 1388, cysteine 1383-cysteine 1397, cysteine 1399-cysteine 1408, cysteine 1415-cysteine 1426, cysteine 1420-cysteine 1435, cysteine 1437-cysteine 1446, cysteine 1453-cysteine 1469, cysteine 1463-cysteine 1479, cysteine 1481-cysteine 1490, cysteine 1497-cysteine 1508, cysteine 1502-cysteine 1517, cysteine 1519-cysteine 1528, cysteine 1535-cysteine 1545, cysteine 1540-cysteine 1556, and cysteine 1558-cysteine 1567. Asparagine 585 carries an N-linked (GlcNAc...) asparagine glycan. One can recognise an EGF-like 10; calcium-binding domain in the interval 605–641; it reads NINECVQHRCQNRATCVDEVGGYSCLCGHGYTGVHCE. The EGF-like 11 domain maps to 642 to 677; the sequence is LDFCSGHQCSEHAVCVDQQHNYTCRCMLGYEGTLCE. Asparagine 662 is a glycosylation site (N-linked (GlcNAc...) asparagine). The 37-residue stretch at 679–715 folds into the EGF-like 12; calcium-binding domain; the sequence is ETDECKSAPCTNNATCIDLVAGYQCLCAPGFKGRTCS. N-linked (GlcNAc...) asparagine glycosylation occurs at asparagine 691. EGF-like domains are found at residues 717 to 753, 755 to 793, and 795 to 831; these read SMNE…HDCS, PATG…LFCE, and SINH…RLCE. The EGF-like 16; calcium-binding domain occupies 833–869; that stretch reads NIDDCLDKPCGALSICKDGINAYDCFCAPGFVGNNCE. The EGF-like 17; calcium-binding domain occupies 871 to 907; it reads EVNECLSQPCQNGASCSDELNSFSCLCLAGTTGSLCE. Positions 909-945 constitute an EGF-like 18; calcium-binding domain; the sequence is NIDECQSSPCMNNGTCLDLSDGFKCICPSGFSGPECS. N-linked (GlcNAc...) asparagine glycosylation occurs at asparagine 921. The 37-residue stretch at 947–983 folds into the EGF-like 19; calcium-binding domain; it reads DINECVSYPCKNGGSCIDQPGNYYCRCLAPFKGLNCE. The 43-residue stretch at 984–1026 folds into the EGF-like 20 domain; it reads LLPCEAVNPCDNGAECVEEADLVLFPLGFQCRCRKGFTGPRCE. An EGF-like 21; calcium-binding domain is found at 1028-1063; sequence NIDECSSNPCLNGFCYDAVDGFYCLCNPGYAGVRCE. One can recognise an EGF-like 22 domain in the interval 1065–1101; that stretch reads HINDCASNMCENNSTCVDLHLSYNCLCLPGWEGEYCQ. Residue asparagine 1077 is glycosylated (N-linked (GlcNAc...) asparagine). The region spanning 1103–1139 is the EGF-like 23; calcium-binding domain; the sequence is ETNECLSNPCKNNATCTDLLNAYRCVCPQGWTGLDCD. Asparagine 1115 carries N-linked (GlcNAc...) asparagine glycosylation. 2 consecutive EGF-like domains span residues 1141–1179 and 1181–1220; these read DVKE…PLCE and PYDP…TRCE. The N-linked (GlcNAc...) asparagine glycan is linked to asparagine 1195. In terms of domain architecture, EGF-like 26; calcium-binding spans 1222-1258; the sequence is DSDDCVSRPCQNRGICVDGVNSYSCFCEPGFSGLHCE. The region spanning 1260–1296 is the EGF-like 27; calcium-binding domain; sequence DINECASNPCQNQAVCQDLVNGFQCSCVPGYFGPHCN. Residues 1298–1334 enclose the EGF-like 28; calcium-binding domain; sequence DVNECDSSPCLHESVCINKPGGFACVCSAGFSGKWCE. The 37-residue stretch at 1336-1372 folds into the EGF-like 29; calcium-binding domain; the sequence is NVDECKSNPCRNNGSCIDGLNGYQCVCSRGFMGDHCE. Asparagine 1348 is a glycosylation site (N-linked (GlcNAc...) asparagine). The region spanning 1374–1409 is the EGF-like 30; calcium-binding domain; the sequence is NTDECSSGPCVHGSCLDEIDAFSCQCEVGWTGHRCQ. Positions 1411–1447 constitute an EGF-like 31; calcium-binding domain; the sequence is NINECEAHPCLNGGSCVDLLDKYACICADGFTGKNCD. Residues 1449 to 1491 enclose the EGF-like 32 domain; that stretch reads DQNVCLQTSLNFSLCFNGGTCVDGPGVNFTCSCRPGFMGDFCE. N-linked (GlcNAc...) asparagine glycans are attached at residues asparagine 1459 and asparagine 1476. An EGF-like 33; calcium-binding domain is found at 1493-1529; it reads EMNECCSEPCFNGAICQDLINGYQCHCRPGWTGLHCE. An EGF-like 34 domain is found at 1531 to 1568; the sequence is DINECLLQPCNQGMCIQNEPGHGYTCFCRPGFVGENCE. N-linked (GlcNAc...) asparagine glycans are attached at residues asparagine 1591, asparagine 1755, and asparagine 1788. The region spanning 1640–1818 is the Laminin G-like 1 domain; that stretch reads ASFGGYSGNS…AIARNNVDNC (179 aa). 4 disulfides stabilise this stretch: cysteine 1792–cysteine 1818, cysteine 1860–cysteine 1871, cysteine 1865–cysteine 1885, and cysteine 1887–cysteine 1896. The EGF-like 35 domain maps to 1856 to 1897; it reads PAPVCPQGICLNGGTCRPVSLPSGASSFFCDCPLHFTGRLCE. Positions 1902-2102 constitute a Laminin G-like 2 domain; the sequence is VFSPRFDGNS…NIQNCDAAVC (201 aa). N-linked (GlcNAc...) asparagine glycans are attached at residues asparagine 2025 and asparagine 2064. 7 disulfide bridges follow: cysteine 2071–cysteine 2102, cysteine 2102–cysteine 2113, cysteine 2107–cysteine 2122, cysteine 2124–cysteine 2133, cysteine 2138–cysteine 2149, cysteine 2143–cysteine 2159, and cysteine 2161–cysteine 2170. EGF-like domains are found at residues 2098 to 2134 and 2135 to 2171; these read DAAV…KLCQ and FTAC…LLCD. N-linked (GlcNAc...) asparagine glycans are attached at residues asparagine 2175 and asparagine 2216. The 191-residue stretch at 2182 to 2372 folds into the Laminin G-like 3 domain; it reads SGLDEFGYSS…PLSGRNVGQC (191 aa). Cystine bridges form between cysteine 2339/cysteine 2372, cysteine 2377/cysteine 2388, cysteine 2382/cysteine 2397, cysteine 2399/cysteine 2408, cysteine 2415/cysteine 2431, cysteine 2425/cysteine 2440, and cysteine 2442/cysteine 2451. 2 consecutive EGF-like domains span residues 2373-2409 and 2411-2452; these read GVNP…ALCS and KVSF…LHCQ. Residues 2459-2642 form the Laminin G-like 4 domain; the sequence is DPFFSGNQSS…NVGDWDGTAC (184 aa). 3 N-linked (GlcNAc...) asparagine glycosylation sites follow: asparagine 2465, asparagine 2528, and asparagine 2570. 2 EGF-like domains span residues 2638–2675 and 2676–2714; these read DGTA…SRCQ and QSIQ…THCD. 6 cysteine pairs are disulfide-bonded: cysteine 2642–cysteine 2653, cysteine 2647–cysteine 2663, cysteine 2665–cysteine 2674, cysteine 2680–cysteine 2691, cysteine 2685–cysteine 2702, and cysteine 2704–cysteine 2713. N-linked (GlcNAc...) asparagine glycosylation is present at asparagine 2694. The Laminin G-like 5 domain occupies 2719 to 2894; sequence LKTIRFIGNS…TKQLQFLQTC (176 aa). N-linked (GlcNAc...) asparagine glycosylation is found at asparagine 2750 and asparagine 2816.

It belongs to the EYS family. In terms of tissue distribution, expressed in retina where it localizes between the retinal pigment epithelium and the outer nuclear layer (at protein level).

The protein resides in the cell projection. Its subcellular location is the cilium. The protein localises to the cytoplasm. It localises to the cytoskeleton. It is found in the cilium axoneme. The protein resides in the secreted. Its subcellular location is the extracellular space. The protein localises to the extracellular matrix. It localises to the interphotoreceptor matrix. Functionally, required to maintain the integrity of photoreceptor cells. Specifically required for normal morphology of the photoreceptor ciliary pocket, and might thus facilitate protein trafficking between the photoreceptor inner and outer segments via the transition zone. The protein is Protein eyes shut homolog of Danio rerio (Zebrafish).